The chain runs to 481 residues: Aspartyl/glutamyl-tRNA(Asn/Gln) amidotransferase subunit B (481 aa).

Belongs to the GatB/GatE family. GatB subfamily. In terms of assembly, heterotrimer of A, B and C subunits.

The catalysed reaction is L-glutamyl-tRNA(Gln) + L-glutamine + ATP + H2O = L-glutaminyl-tRNA(Gln) + L-glutamate + ADP + phosphate + H(+). It catalyses the reaction L-aspartyl-tRNA(Asn) + L-glutamine + ATP + H2O = L-asparaginyl-tRNA(Asn) + L-glutamate + ADP + phosphate + 2 H(+). Allows the formation of correctly charged Asn-tRNA(Asn) or Gln-tRNA(Gln) through the transamidation of misacylated Asp-tRNA(Asn) or Glu-tRNA(Gln) in organisms which lack either or both of asparaginyl-tRNA or glutaminyl-tRNA synthetases. The reaction takes place in the presence of glutamine and ATP through an activated phospho-Asp-tRNA(Asn) or phospho-Glu-tRNA(Gln). The polypeptide is Aspartyl/glutamyl-tRNA(Asn/Gln) amidotransferase subunit B (Pseudomonas syringae pv. tomato (strain ATCC BAA-871 / DC3000)).